Reading from the N-terminus, the 304-residue chain is Serine/threonine-protein phosphatase PP1 isozyme 3 (304 aa).

Positions 61, 63, 89, and 121 each coordinate Mn(2+). The active-site Proton donor is His-122. His-170 and His-245 together coordinate Mn(2+).

Belongs to the PPP phosphatase family. PP-1 subfamily. The cofactor is Mn(2+).

The enzyme catalyses O-phospho-L-seryl-[protein] + H2O = L-seryl-[protein] + phosphate. The catalysed reaction is O-phospho-L-threonyl-[protein] + H2O = L-threonyl-[protein] + phosphate. This is Serine/threonine-protein phosphatase PP1 isozyme 3 (NPP3) from Nicotiana tabacum (Common tobacco).